The chain runs to 233 residues: Purine nucleoside phosphorylase DeoD-type (233 aa).

His-4 is an a purine D-ribonucleoside binding site. Phosphate is bound by residues Gly-20, Arg-24, Arg-43, and 87 to 90 (RVGT). A purine D-ribonucleoside is bound by residues Glu-162, 179–181 (EME), and 203–204 (SD). Asp-204 (proton donor) is an active-site residue.

This sequence belongs to the PNP/UDP phosphorylase family. Homohexamer; trimer of homodimers.

It catalyses the reaction a purine D-ribonucleoside + phosphate = a purine nucleobase + alpha-D-ribose 1-phosphate. It carries out the reaction a purine 2'-deoxy-D-ribonucleoside + phosphate = a purine nucleobase + 2-deoxy-alpha-D-ribose 1-phosphate. Functionally, catalyzes the reversible phosphorolytic breakdown of the N-glycosidic bond in the beta-(deoxy)ribonucleoside molecules, with the formation of the corresponding free purine bases and pentose-1-phosphate. In Alkaliphilus metalliredigens (strain QYMF), this protein is Purine nucleoside phosphorylase DeoD-type.